The primary structure comprises 533 residues: Adenine deaminase (533 aa).

It belongs to the metallo-dependent hydrolases superfamily. Adenine deaminase family. Mn(2+) is required as a cofactor.

The catalysed reaction is adenine + H2O + H(+) = hypoxanthine + NH4(+). In Sulfurovum sp. (strain NBC37-1), this protein is Adenine deaminase.